The chain runs to 307 residues: Transcriptional repressor scratch 2 (307 aa).

The interval Met1 to Val20 is SNAG domain. 2 disordered regions span residues Leu34 to Ser90 and Gly116 to Gln148. Residues Gly124 to Gln148 show a composition bias toward gly residues. C2H2-type zinc fingers lie at residues His155–His177, Arg186–His208, His212–His234, and Phe240–His262. A C2H2-type 5; atypical zinc finger spans residues Tyr268–Cys291.

It belongs to the snail C2H2-type zinc-finger protein family.

It localises to the nucleus. May be involved in transcriptional regulation. This chain is Transcriptional repressor scratch 2 (SCRT2), found in Homo sapiens (Human).